Here is a 398-residue protein sequence, read N- to C-terminus: Tyrosine--tRNA ligase (398 aa).

Positions 48–57 match the 'HIGH' region motif; it reads PTGADIHLGH. The 'KMSKS' region motif lies at 235 to 239; that stretch reads KMSKS. ATP is bound at residue K238. The region spanning 334–398 is the S4 RNA-binding domain; the sequence is VKLAYLLGAT…GKNKFVRLVL (65 aa).

The protein belongs to the class-I aminoacyl-tRNA synthetase family. TyrS type 2 subfamily. As to quaternary structure, homodimer.

Its subcellular location is the cytoplasm. It catalyses the reaction tRNA(Tyr) + L-tyrosine + ATP = L-tyrosyl-tRNA(Tyr) + AMP + diphosphate + H(+). Functionally, catalyzes the attachment of tyrosine to tRNA(Tyr) in a two-step reaction: tyrosine is first activated by ATP to form Tyr-AMP and then transferred to the acceptor end of tRNA(Tyr). This is Tyrosine--tRNA ligase from Trichormus variabilis (strain ATCC 29413 / PCC 7937) (Anabaena variabilis).